Reading from the N-terminus, the 826-residue chain is Copper-transporting ATPase 1 (826 aa).

HMA domains follow at residues 15-80 and 82-147; these read APTD…YEPK and IIQE…YDVR. Cu cation is bound by residues Cys26, Cys29, Cys93, and Cys96. The next 6 membrane-spanning stretches (helical) occupy residues 172–192, 209–229, 246–266, 270–290, 429–449, and 457–477; these read LVILSAVLTLPLFLVEMGSHF, NLYIQFALATAVLFGPGLRFF, LVVLGTTAAWGYSVVATFASG, SGTANVYYEAAAVIVTLILLG, AWFVPAVILVAVLTFAAWYVF, and FALVNAVAVLIIACPCAMGLA. Asp514 serves as the catalytic 4-aspartylphosphate intermediate. Residues Asp713 and Asp717 each contribute to the Mg(2+) site. 2 helical membrane passes run 772 to 792 and 795 to 815; these read FWAFAYNVSLVPVAAGVLYPL and TLLSPILAAAAMAMSSVFVLG.

Belongs to the cation transport ATPase (P-type) (TC 3.A.3) family. Type IB subfamily.

The protein localises to the cell membrane. The enzyme catalyses Cu(2+)(in) + ATP + H2O = Cu(2+)(out) + ADP + phosphate + H(+). Functionally, involved in copper transport. This chain is Copper-transporting ATPase 1 (actP1), found in Rhizobium meliloti (strain 1021) (Ensifer meliloti).